The primary structure comprises 157 residues: uncharacterized protein (157 aa).

Functionally, may be a DNA-binding protein involved in virion nucleoprotein condensation. This is an uncharacterized protein from Mycoplasma (Bacteriophage L2).